Reading from the N-terminus, the 342-residue chain is Platelet-activating factor receptor (342 aa).

The Extracellular segment spans residues 1 to 16; sequence MEPNNSFRVDSEFRYT. The N-linked (GlcNAc...) asparagine glycan is linked to N4. Residues 17–38 traverse the membrane as a helical segment; the sequence is LFPIFYSIVFVLGVIANSYVLW. At 39–54 the chain is on the cytoplasmic side; that stretch reads VFARLYPSKKFNEIKI. A helical membrane pass occupies residues 55–74; that stretch reads FMVNLTMADLLFLVTLPLWI. Topologically, residues 75-91 are extracellular; that stretch reads VYYYNQGDWILPKFLCN. C90 and C173 are joined by a disulfide. Residues 92–113 traverse the membrane as a helical segment; it reads LAGCFFFINTYCSVAFLAVITY. At 114–133 the chain is on the cytoplasmic side; it reads NRFQAVTRPIKTAQATTRKR. Residues 134–155 traverse the membrane as a helical segment; the sequence is GILLSLIIWVSIVGAASYFFVL. Residues 156–184 lie on the Extracellular side of the membrane; it reads DSTNREPNKTGSANITRCFEHYEKGSIPV. N-linked (GlcNAc...) asparagine glycosylation is found at N163 and N169. Residues 185–205 traverse the membrane as a helical segment; it reads LTIHIFLVFSFFLVFLIILFC. At 206–233 the chain is on the cytoplasmic side; that stretch reads NLVIIRTLLTQQVQIQRNAEVKRRALWM. The helical transmembrane segment at 234–254 threads the bilayer; the sequence is VCTVLAVFIICFVPHHLVQLP. The Extracellular segment spans residues 255 to 276; sequence WTLAELGFQDTDFHQAINDAHQ. The chain crosses the membrane as a helical span at residues 277-296; sequence VTLCLLSTNCVLDPIIYCFL. At 297–342 the chain is on the cytoplasmic side; it reads TKKFRKHLTEKLYSMRESRKCSRATSETGTEVVMQLKDVPVKSLKY.

The protein belongs to the G-protein coupled receptor 1 family. Interacts with ARRB1. Found in oviductal epithelial and stroma cells. Levels in the oviduct are raised at days 2-4 of both pregnancy and of the estrus cycle. In the endometrium, localization is predominantly to the apical borders of glandular and luminal epithelial cells. Expressed at lower levels in endometrial stromal cells. Levels in the endometrium are increased at day 20 of pregnancy (at protein level).

Its subcellular location is the cell membrane. Its function is as follows. Receptor for platelet activating factor, a chemotactic phospholipid mediator that possesses potent inflammatory, smooth-muscle contractile and hypotensive activity. Seems to mediate its action via a G protein that activates a phosphatidylinositol-calcium second messenger system. May be involved in the morphological and physical modifications of the oviduct and uterus during the estrus cycle and early pregnancy. The chain is Platelet-activating factor receptor from Bos taurus (Bovine).